Consider the following 205-residue polypeptide: Basigin (205 aa).

An N-terminal signal peptide occupies residues 1-18 (MAAALFVLLGFALLGTHG). One can recognise an Ig-like C2-type domain in the interval 19-103 (ASGAAGTVFT…MGTANIQLHG (85 aa)). Residues 19-205 (ASGAAGTVFT…AIITLRVRSH (187 aa)) are Extracellular-facing. 2 cysteine pairs are disulfide-bonded: Cys41–Cys87 and Cys126–Cys185. Asn44, Asn152, and Asn186 each carry an N-linked (GlcNAc...) asparagine glycan. One can recognise an Ig-like V-type domain in the interval 105–199 (PRVKAVKSSE…SKGSDQAIIT (95 aa)).

As to quaternary structure, homooligomer. Interacts with VEGFA, KDR/VEGFR2, PPIA/CYPA, SLC16A12, SLC16A11, ATP1B2, MAG, L1CAM and AJAP1. Interacts with SLC16A1; interaction mediates SLC16A1 targeting to the plasma membrane. Interacts with SLC16A3; interaction mediates SLC16A3 targeting to the plasma membrane. Interacts with PPIL2; regulates BSG transport to the cell membrane. Interacts with XKR8; promoting its localization at the cell membrane. Interacts with SLC16A6; this interaction mediates targeting to the plasma membrane.

It localises to the cell membrane. The protein localises to the endoplasmic reticulum membrane. It is found in the basolateral cell membrane. In terms of biological role, signaling receptor for cyclophilins, essential for PPIA/CYPA and PPIB/CYPB-dependent signaling related to chemotaxis and adhesion of immune cells. Plays an important role in targeting the monocarboxylate transporters SLC16A1/GLUT1, SLC16A3, SLC16A8, SLC16A11 and SLC16A12 to the plasma membrane. Acts as a coreceptor for vascular endothelial growth factor receptor 2 (KDR/VEGFR2) in endothelial cells enhancing its VEGFA-mediated activation and downstream signaling. Promotes angiogenesis through EPAS1/HIF2A-mediated up-regulation of VEGFA and KDR/VEGFR2 in endothelial cells. This is Basigin (BSG) from Bos taurus (Bovine).